The following is a 1789-amino-acid chain: Mediator of RNA polymerase II transcription subunit 12 (1789 aa).

4 disordered regions span residues 1–138 (MTSR…QRRG), 156–288 (SSPT…GSSA), 1592–1656 (IGTA…GWHA), and 1707–1727 (THLNLGNNSNPPTPSPMNPTR). 2 stretches are compositionally biased toward low complexity: residues 25–66 (SQQR…QQQQ) and 81–98 (TRNNNHNNFSNPNNTLNN). The segment covering 107 to 124 (QDPTSIVSPADPSGSSPA) has biased composition (polar residues). The segment covering 220–229 (AVPDHSRREQ) has biased composition (basic and acidic residues). Low complexity-rich tracts occupy residues 271-288 (RSSALATASSSSTTGSSA), 1592-1628 (IGTATGTGSPAPGTTPTHTPGVTPGPQNAVGAGSAVS), 1647-1656 (QQAQAQGWHA), and 1707-1716 (THLNLGNNSN).

It belongs to the Mediator complex subunit 12 family. In terms of assembly, component of the srb8-11 complex, which itself associates with the Mediator complex.

It localises to the nucleus. In terms of biological role, component of the srb8-11 complex. The srb8-11 complex is a regulatory module of the Mediator complex which is itself involved in regulation of basal and activated RNA polymerase II-dependent transcription. The srb8-11 complex may be involved in the transcriptional repression of a subset of genes regulated by Mediator. It may inhibit the association of the Mediator complex with RNA polymerase II to form the holoenzyme complex. The protein is Mediator of RNA polymerase II transcription subunit 12 (srb8) of Neurospora crassa (strain ATCC 24698 / 74-OR23-1A / CBS 708.71 / DSM 1257 / FGSC 987).